Reading from the N-terminus, the 2274-residue chain is Adenomatous polyposis coli protein 2 (2274 aa).

Positions 5–59 form a coiled coil; the sequence is MASYEQLVRQVEALKAENTHLRQELRDNSSHLSKLETETSGMKEVLKHLQGKLEQ. Disordered stretches follow at residues 97-120 and 248-269; these read GPEPAARTPEGSPVHGSGPSKDSF and VEEEQEAEVPTHPEDGTPQPGN. ARM repeat units follow at residues 301-341, 472-511, 515-555, 557-602, 608-647, and 650-689; these read PESC…GAKD, ANKATLCARRGCMEAIVAQLGSESEELHQVVSSILRNLSW, INSK…NLSA, STEN…NVSS, EDYRQVLRDHNCLQTLLQHLTSHSLTIVSNACGTLWNLSA, and PRDQELLWDLGAVGMLRNLVHSKHKMIAMGSAAALRNLLA. Residues 832–856 adopt a coiled-coil conformation; it reads AAKAKAKLALAVARIDRLVEDISAL. Disordered stretches follow at residues 859 to 901, 1061 to 1143, and 1165 to 1216; these read SSDD…GSRA, CSSL…NCVQ, and SIAS…TSQF. A compositionally biased stretch (low complexity) spans 861 to 870; sequence DDSFSLSSGD. Residues 1049 to 1068 form repeat 1; sequence LVAQDGPMSLSRCSSLSSLS. A 5 X 20 AA approximate repeat of F-X-V-E-X-T-P-X-C-F-S-R-X-S-S-L-S-S-L-S region spans residues 1049 to 1565; the sequence is LVAQDGPMSL…SLTSSASSLS (517 aa). The interaction with CTNNB1 stretch occupies residues 1049 to 1565; the sequence is LVAQDGPMSL…SLTSSASSLS (517 aa). Polar residues predominate over residues 1077-1086; the sequence is QAENLDSDSS. Residues 1092–1103 are compositionally biased toward low complexity; it reads EAGPGEAELGRA. The segment covering 1133–1143 has biased composition (polar residues); it reads TPSSSSENCVQ. Residues 1140–1159 form repeat 2; that stretch reads NCVQETPLVLSRCSSVSSLG. Residues 1250–1269 form repeat 3; it reads FTVEKPDENFSCASSLSALA. Disordered regions lie at residues 1290-1323, 1368-1480, 1493-1631, 1699-2003, 2022-2122, and 2135-2274; these read ERAVGGGGHRRRDEAASRLDGPAPAGSRARSATD, RGDD…LQSL, FYDS…DIRP, STLQ…RGRP, PRQP…IKDE, and TALP…SLLE. A compositionally biased stretch (polar residues) spans 1374–1397; the sequence is TDSAEGTPVNFSSAASLSDETLQG. Residues 1375–1394 form repeat 4; the sequence is DSAEGTPVNFSSAASLSDET. The span at 1399-1411 shows a compositional bias: basic and acidic residues; sequence SRDKPAGPGDRQK. A compositionally biased stretch (polar residues) spans 1455-1470; the sequence is RPQSARSNRDSSCQTR. Over residues 1517–1529 the composition is skewed to basic and acidic residues; it reads LKREKPAGRKETP. Residues 1546 to 1565 form repeat 5; sequence LIVDETPPCYSLTSSASSLS. The segment covering 1556–1574 has biased composition (low complexity); it reads SLTSSASSLSEPEAPEQPA. Ser1563 and Ser1565 each carry phosphoserine. Residues 1608–1624 are compositionally biased toward basic residues; sequence PRRRTQVPGSRRRKPRA. 2 stretches are compositionally biased toward low complexity: residues 1780–1795 and 1839–1868; these read SGPCTTPKKTGTSGTT and LAKTPSSSSSQTSPASQPLPRRSPLATPTG. Positions 1792–1871 are required for localization to microtubules and function in microtubule stabilization; sequence SGTTQPETVT…PLATPTGGPL (80 aa). Phosphoserine is present on Ser1861. The span at 1910–1921 shows a compositional bias: pro residues; that stretch reads RVPPPLARPSPE. Low complexity-rich tracts occupy residues 1945-1955 and 1983-1997; these read RMASARSSGSE and LSSADSTASTSQAAS. The tract at residues 2037–2114 is interaction with MAPRE1 and MAPRE3; sequence GLAPLAPRRT…PLPRVAPPGT (78 aa). The span at 2165-2179 shows a compositional bias: polar residues; it reads DVATSKTNSSTSPSL.

This sequence belongs to the adenomatous polyposis coli (APC) family. As to quaternary structure, interacts with PSRC1. Interacts with MAPRE3. Interacts with APC, CTNNB1, TP53BP2, MAPRE1 and possibly with AXIN2. In terms of tissue distribution, expressed in brain and other neural tissues.

The protein localises to the cytoplasm. It is found in the cytoskeleton. Its subcellular location is the golgi apparatus. The protein resides in the perinuclear region. Its function is as follows. Stabilizes microtubules and may regulate actin fiber dynamics through the activation of Rho family GTPases. May also function in Wnt signaling by promoting the rapid degradation of CTNNB1. The sequence is that of Adenomatous polyposis coli protein 2 (Apc2) from Mus musculus (Mouse).